Here is a 266-residue protein sequence, read N- to C-terminus: Ras-like protein family member 12 (266 aa).

Residues 27-34, 74-78, and 134-137 each bind GTP; these read GRRGAGKS, DTADL, and NKLD.

Belongs to the small GTPase superfamily. Ras family.

The catalysed reaction is GTP + H2O = GDP + phosphate + H(+). This is Ras-like protein family member 12 (RASL12) from Bos taurus (Bovine).